The chain runs to 664 residues: Armadillo repeat protein involved in nucleocytoplasmic transport Syo2 (664 aa).

An ARM repeat occupies 77-119; the sequence is GLVSKLIDRISDDSVEVVVEATGALRNLAIEEGYSICMDMYRK.

Belongs to the nuclear import and ribosome assembly adapter family. In terms of assembly, forms a heterotrimeric complex with rpl5 and rpl11a or rpl11b; interaction of this complex with kap104 allows the nuclear import of the heterotrimer. Component of a hexameric 5S RNP precursor complex; this complex acts as a precursor for ribosome assembly.

It localises to the cytoplasm. It is found in the nucleus. Nuclear import adapter that specifically recruits the two functionally and topologically linked ribosomal proteins rpl5 and rpl11 (encoded by rpl11a and rpl11b). Guarantees that this cargo pair remains bound together from the time of synthesis in the cytoplasm until delivery to the nascent 5S rRNA in the nucleus. This chain is Armadillo repeat protein involved in nucleocytoplasmic transport Syo2, found in Schizosaccharomyces pombe (strain 972 / ATCC 24843) (Fission yeast).